The sequence spans 178 residues: Peptide deformylase (178 aa).

Fe cation contacts are provided by cysteine 102 and histidine 144. Residue glutamate 145 is part of the active site. Residue histidine 148 coordinates Fe cation.

It belongs to the polypeptide deformylase family. Fe(2+) serves as cofactor.

The catalysed reaction is N-terminal N-formyl-L-methionyl-[peptide] + H2O = N-terminal L-methionyl-[peptide] + formate. Functionally, removes the formyl group from the N-terminal Met of newly synthesized proteins. Requires at least a dipeptide for an efficient rate of reaction. N-terminal L-methionine is a prerequisite for activity but the enzyme has broad specificity at other positions. The protein is Peptide deformylase of Leptospira interrogans serogroup Icterohaemorrhagiae serovar copenhageni (strain Fiocruz L1-130).